Reading from the N-terminus, the 144-residue chain is Small ribosomal subunit protein eS19B (144 aa).

The protein belongs to the eukaryotic ribosomal protein eS19 family. As to quaternary structure, component of the small ribosomal subunit (SSU). Mature yeast ribosomes consist of a small (40S) and a large (60S) subunit. The 40S small subunit contains 1 molecule of ribosomal RNA (18S rRNA) and 33 different proteins (encoded by 57 genes). The large 60S subunit contains 3 rRNA molecules (25S, 5.8S and 5S rRNA) and 46 different proteins (encoded by 81 genes).

Its subcellular location is the cytoplasm. In terms of biological role, component of the ribosome, a large ribonucleoprotein complex responsible for the synthesis of proteins in the cell. The small ribosomal subunit (SSU) binds messenger RNAs (mRNAs) and translates the encoded message by selecting cognate aminoacyl-transfer RNA (tRNA) molecules. The large subunit (LSU) contains the ribosomal catalytic site termed the peptidyl transferase center (PTC), which catalyzes the formation of peptide bonds, thereby polymerizing the amino acids delivered by tRNAs into a polypeptide chain. The nascent polypeptides leave the ribosome through a tunnel in the LSU and interact with protein factors that function in enzymatic processing, targeting, and the membrane insertion of nascent chains at the exit of the ribosomal tunnel. eS19 is required for proper maturation of the small (40S) ribosomal subunit. Binds to 40S pre-ribosomal particles, probably required after association of NOC4 but before association of ENP1, TSR1 and RIO2 with 20/21S pre-rRNA. Its function is as follows. Required for proper maturation of the small (40S) ribosomal subunit. Binds to 40s pre-ribosomal particles, probably required after association of NOC4 but before association of ENP1, TSR1 and RIO2 with 20/21S pre-rRNA. This is Small ribosomal subunit protein eS19B from Saccharomyces cerevisiae (strain ATCC 204508 / S288c) (Baker's yeast).